A 337-amino-acid polypeptide reads, in one-letter code: tRNA N6-adenosine threonylcarbamoyltransferase (337 aa).

Fe cation-binding residues include H111 and H115. Substrate contacts are provided by residues 134–138 (LVSGG), D167, G180, and N272. Position 300 (D300) interacts with Fe cation.

Belongs to the KAE1 / TsaD family. The cofactor is Fe(2+).

The protein localises to the cytoplasm. It carries out the reaction L-threonylcarbamoyladenylate + adenosine(37) in tRNA = N(6)-L-threonylcarbamoyladenosine(37) in tRNA + AMP + H(+). Its function is as follows. Required for the formation of a threonylcarbamoyl group on adenosine at position 37 (t(6)A37) in tRNAs that read codons beginning with adenine. Is involved in the transfer of the threonylcarbamoyl moiety of threonylcarbamoyl-AMP (TC-AMP) to the N6 group of A37, together with TsaE and TsaB. TsaD likely plays a direct catalytic role in this reaction. The chain is tRNA N6-adenosine threonylcarbamoyltransferase from Shewanella woodyi (strain ATCC 51908 / MS32).